Reading from the N-terminus, the 238-residue chain is Ubiquinone biosynthesis O-methyltransferase (238 aa).

Positions 40, 59, 80, and 125 each coordinate S-adenosyl-L-methionine.

The protein belongs to the methyltransferase superfamily. UbiG/COQ3 family.

The enzyme catalyses a 3-demethylubiquinol + S-adenosyl-L-methionine = a ubiquinol + S-adenosyl-L-homocysteine + H(+). It catalyses the reaction a 3-(all-trans-polyprenyl)benzene-1,2-diol + S-adenosyl-L-methionine = a 2-methoxy-6-(all-trans-polyprenyl)phenol + S-adenosyl-L-homocysteine + H(+). It functions in the pathway cofactor biosynthesis; ubiquinone biosynthesis. In terms of biological role, O-methyltransferase that catalyzes the 2 O-methylation steps in the ubiquinone biosynthetic pathway. The polypeptide is Ubiquinone biosynthesis O-methyltransferase (Paracidovorax citrulli (strain AAC00-1) (Acidovorax citrulli)).